The chain runs to 432 residues: Non-peptidase homolog YmxG (432 aa).

A signal peptide spans 1–20 (MKKFLITLLLGVFMGLQASA).

The protein belongs to the peptidase M16 family.

The protein localises to the secreted. In terms of biological role, may contribute to the full activity of the protease PqqE. The sequence is that of Non-peptidase homolog YmxG from Helicobacter pylori (strain ATCC 700392 / 26695) (Campylobacter pylori).